Here is a 167-residue protein sequence, read N- to C-terminus: Small ribosomal subunit protein uS3m (167 aa).

Residues methionine 1 to alanine 35 constitute a mitochondrion transit peptide.

It belongs to the universal ribosomal protein uS3 family. As to quaternary structure, component of the mitochondrial ribosome small subunit (28S) which comprises a 12S rRNA and about 30 distinct proteins.

Its subcellular location is the mitochondrion. The polypeptide is Small ribosomal subunit protein uS3m (Mrps24) (Mus musculus (Mouse)).